Here is a 187-residue protein sequence, read N- to C-terminus: Large ribosomal subunit protein uL5 (187 aa).

This sequence belongs to the universal ribosomal protein uL5 family. As to quaternary structure, part of the 50S ribosomal subunit; part of the 5S rRNA/L5/L18/L25 subcomplex. Contacts the 5S rRNA and the P site tRNA. Forms a bridge to the 30S subunit in the 70S ribosome.

In terms of biological role, this is one of the proteins that bind and probably mediate the attachment of the 5S RNA into the large ribosomal subunit, where it forms part of the central protuberance. In the 70S ribosome it contacts protein S13 of the 30S subunit (bridge B1b), connecting the 2 subunits; this bridge is implicated in subunit movement. Contacts the P site tRNA; the 5S rRNA and some of its associated proteins might help stabilize positioning of ribosome-bound tRNAs. The chain is Large ribosomal subunit protein uL5 from Mycobacteroides abscessus (strain ATCC 19977 / DSM 44196 / CCUG 20993 / CIP 104536 / JCM 13569 / NCTC 13031 / TMC 1543 / L948) (Mycobacterium abscessus).